Reading from the N-terminus, the 1925-residue chain is Cilia- and flagella-associated protein 65 (1925 aa).

Residues 188 to 208 form a helical membrane-spanning segment; it reads FFTVIPQPIFLSPGITLTLPI. The region spanning 877–986 is the MSP domain; it reads QLKLDTHKSL…THYMLRLVGV (110 aa). Residues 1525–1550 are a coiled coil; it reads SQQLMRQYHKELQEWKDEKVRQEVEF. 2 disordered regions span residues 1645 to 1667 and 1736 to 1823; these read KRKAPREESETSEEKSPNKWGPV and SSWE…PESQ. 2 stretches are compositionally biased toward basic and acidic residues: residues 1649-1661 and 1739-1762; these read PREESETSEEKSP and EDGKGKQPKEDRPEHYPGLGKKEE. Residues 1763–1804 show a composition bias toward acidic residues; sequence GEEEKGEEEEEELEEEEEEEEETEEEELGKEEIEEKEEERDE.

It belongs to the CFAP65 family. Interacts with CFAP47.

It is found in the cell projection. The protein resides in the cilium. The protein localises to the flagellum membrane. It localises to the cytoplasmic vesicle. Its subcellular location is the secretory vesicle. It is found in the acrosome membrane. The protein resides in the cytoplasm. In terms of biological role, plays a role in flagellar formation and sperm motility. The protein is Cilia- and flagella-associated protein 65 of Homo sapiens (Human).